The primary structure comprises 194 residues: Calcium-binding protein J (194 aa).

2 consecutive EF-hand domains span residues 62-97 (WDKDLLIQLFKLFDTDCNGILDFKEFVTSLYIMTKA) and 98-133 (PVVEKLSLLFDLFDKDQSGHLEVDEVEKLIGVAVAC). Ca(2+) is bound by residues D75, D77, N79, E86, D111, D113, S115, H117, and E122.

The protein belongs to the recoverin family.

This Dictyostelium discoideum (Social amoeba) protein is Calcium-binding protein J (cbpJ).